Consider the following 380-residue polypeptide: G-protein coupled receptor (380 aa).

A run of 7 helical transmembrane segments spans residues 26–46 (VISIFSLTTFVGLAITLYLGI), 60–80 (LVCCDVLIVNAVCLITLPLWV), 97–117 (FAGMFYTMNVYMSVWSCVIVT), 145–165 (VTILTLLVTFIGLFSLTETSI), 184–204 (AALGYTVPWLAIAIMIVHIIL), 220–240 (ILMWMMFTLLVTQGPYYSLSA), and 275–295 (VAMLVCTHALAITRMFSVPLI). The cysteines at positions 95 and 170 are disulfide-linked. The segment at 328–380 (SQSKLLRGEENPNYDYSPKSVRIKPLKSPGGGDNSSLKDEGYDEESQNGFSIG) is disordered.

This sequence belongs to the G-protein coupled receptor 1 family.

The protein resides in the host membrane. The protein is G-protein coupled receptor of Elephas maximus (Indian elephant).